The primary structure comprises 249 residues: Large ribosomal subunit protein uL30A (249 aa).

The protein belongs to the universal ribosomal protein uL30 family. As to quaternary structure, component of the small ribosomal subunit (SSU). Mature yeast ribosomes consist of a small (40S) and a large (60S) subunit. The 40S small subunit contains 1 molecule of ribosomal RNA (18S rRNA) and at least 33 different proteins. The large 60S subunit contains 3 rRNA molecules (25S, 5.8S and 5S rRNA) and at least 46 different proteins.

It is found in the cytoplasm. The protein localises to the nucleus. It localises to the nucleolus. In terms of biological role, component of the ribosome, a large ribonucleoprotein complex responsible for the synthesis of proteins in the cell. The small ribosomal subunit (SSU) binds messenger RNAs (mRNAs) and translates the encoded message by selecting cognate aminoacyl-transfer RNA (tRNA) molecules. The large subunit (LSU) contains the ribosomal catalytic site termed the peptidyl transferase center (PTC), which catalyzes the formation of peptide bonds, thereby polymerizing the amino acids delivered by tRNAs into a polypeptide chain. The nascent polypeptides leave the ribosome through a tunnel in the LSU and interact with protein factors that function in enzymatic processing, targeting, and the membrane insertion of nascent chains at the exit of the ribosomal tunnel. This is Large ribosomal subunit protein uL30A (rlp7) from Schizosaccharomyces pombe (strain 972 / ATCC 24843) (Fission yeast).